We begin with the raw amino-acid sequence, 119 residues long: Large ribosomal subunit protein bL20 (119 aa).

This sequence belongs to the bacterial ribosomal protein bL20 family.

Binds directly to 23S ribosomal RNA and is necessary for the in vitro assembly process of the 50S ribosomal subunit. It is not involved in the protein synthesizing functions of that subunit. The sequence is that of Large ribosomal subunit protein bL20 from Xanthomonas oryzae pv. oryzae (strain KACC10331 / KXO85).